Reading from the N-terminus, the 334-residue chain is Protein-methionine-sulfoxide reductase catalytic subunit MsrP (334 aa).

A signal peptide (tat-type signal) is located at residues 1–44 (MKKIRPLTEADVTAESAFFMQRRQVLKALGISAAALSLPSTAQA). Residues asparagine 88, 91–92 (YE), cysteine 146, threonine 181, asparagine 233, arginine 238, and 249–251 (GIK) each bind Mo-molybdopterin.

Belongs to the MsrP family. In terms of assembly, heterodimer of a catalytic subunit (MsrP) and a heme-binding subunit (MsrQ). Requires Mo-molybdopterin as cofactor. In terms of processing, predicted to be exported by the Tat system. The position of the signal peptide cleavage has not been experimentally proven.

Its subcellular location is the periplasm. It catalyses the reaction L-methionyl-[protein] + a quinone + H2O = L-methionyl-(S)-S-oxide-[protein] + a quinol. It carries out the reaction L-methionyl-[protein] + a quinone + H2O = L-methionyl-(R)-S-oxide-[protein] + a quinol. Part of the MsrPQ system that repairs oxidized periplasmic proteins containing methionine sulfoxide residues (Met-O), using respiratory chain electrons. Thus protects these proteins from oxidative-stress damage caused by reactive species of oxygen and chlorine generated by the host defense mechanisms. MsrPQ is essential for the maintenance of envelope integrity under bleach stress, rescuing a wide series of structurally unrelated periplasmic proteins from methionine oxidation, including the primary periplasmic chaperone SurA and the lipoprotein Pal. The catalytic subunit MsrP is non-stereospecific, being able to reduce both (R-) and (S-) diastereoisomers of methionine sulfoxide. The polypeptide is Protein-methionine-sulfoxide reductase catalytic subunit MsrP (Salmonella dublin (strain CT_02021853)).